Here is a 168-residue protein sequence, read N- to C-terminus: Protein-export protein SecB (168 aa).

A compositionally biased stretch (polar residues) spans methionine 1–glutamate 10. Positions methionine 1–proline 22 are disordered.

The protein belongs to the SecB family. As to quaternary structure, homotetramer, a dimer of dimers. One homotetramer interacts with 1 SecA dimer.

Its subcellular location is the cytoplasm. Its function is as follows. One of the proteins required for the normal export of preproteins out of the cell cytoplasm. It is a molecular chaperone that binds to a subset of precursor proteins, maintaining them in a translocation-competent state. It also specifically binds to its receptor SecA. The polypeptide is Protein-export protein SecB (Parvibaculum lavamentivorans (strain DS-1 / DSM 13023 / NCIMB 13966)).